The sequence spans 421 residues: UPF0300 protein C737.04 (421 aa).

Belongs to the UPF0300 family.

It is found in the cytoplasm. The chain is UPF0300 protein C737.04 from Schizosaccharomyces pombe (strain 972 / ATCC 24843) (Fission yeast).